The primary structure comprises 452 residues: Bifunctional protein GlmU (452 aa).

The segment at 1–224 is pyrophosphorylase; sequence MNIVILAAGM…EWETHGVNSK (224 aa). Residues 6 to 9, K20, Q71, 76 to 77, 98 to 100, G135, E149, N164, and N222 contribute to the UDP-N-acetyl-alpha-D-glucosamine site; these read LAAG, GT, and YGD. D100 is a Mg(2+) binding site. Mg(2+) is bound at residue N222. The tract at residues 225 to 245 is linker; sequence VQLAELERIHQRNIAHALLEQ. The tract at residues 246-452 is N-acetyltransferase; sequence GVTLADPARI…NWQRPVKIKK (207 aa). Residues R328 and K346 each contribute to the UDP-N-acetyl-alpha-D-glucosamine site. H358 functions as the Proton acceptor in the catalytic mechanism. Positions 361 and 372 each coordinate UDP-N-acetyl-alpha-D-glucosamine. Residues A375, 381–382, S400, A418, and R435 each bind acetyl-CoA; that span reads NY.

This sequence in the N-terminal section; belongs to the N-acetylglucosamine-1-phosphate uridyltransferase family. The protein in the C-terminal section; belongs to the transferase hexapeptide repeat family. Homotrimer. Mg(2+) serves as cofactor.

Its subcellular location is the cytoplasm. The catalysed reaction is alpha-D-glucosamine 1-phosphate + acetyl-CoA = N-acetyl-alpha-D-glucosamine 1-phosphate + CoA + H(+). It carries out the reaction N-acetyl-alpha-D-glucosamine 1-phosphate + UTP + H(+) = UDP-N-acetyl-alpha-D-glucosamine + diphosphate. Its pathway is nucleotide-sugar biosynthesis; UDP-N-acetyl-alpha-D-glucosamine biosynthesis; N-acetyl-alpha-D-glucosamine 1-phosphate from alpha-D-glucosamine 6-phosphate (route II): step 2/2. The protein operates within nucleotide-sugar biosynthesis; UDP-N-acetyl-alpha-D-glucosamine biosynthesis; UDP-N-acetyl-alpha-D-glucosamine from N-acetyl-alpha-D-glucosamine 1-phosphate: step 1/1. It functions in the pathway bacterial outer membrane biogenesis; LPS lipid A biosynthesis. Catalyzes the last two sequential reactions in the de novo biosynthetic pathway for UDP-N-acetylglucosamine (UDP-GlcNAc). The C-terminal domain catalyzes the transfer of acetyl group from acetyl coenzyme A to glucosamine-1-phosphate (GlcN-1-P) to produce N-acetylglucosamine-1-phosphate (GlcNAc-1-P), which is converted into UDP-GlcNAc by the transfer of uridine 5-monophosphate (from uridine 5-triphosphate), a reaction catalyzed by the N-terminal domain. This Janthinobacterium sp. (strain Marseille) (Minibacterium massiliensis) protein is Bifunctional protein GlmU.